We begin with the raw amino-acid sequence, 182 residues long: MPFTSEIISIILLAIGLSMDGFSVSLGLGMQQLRLKRIAYIGLTIGFLHMLMPLAGMLLGQVISEQIGQWTSFAGGVLLFLIGAHMFFSAFRLTEGFRWQPVGVGLWIIAFSVSLDSFTVGLGLGISGVQIFVTLFAFGIVSCFLTWLGMLIGRKVYRFLGVYSELLGGSILCGFGIFILFS.

Helical transmembrane passes span 7 to 27, 38 to 58, 71 to 91, 106 to 126, 131 to 151, and 159 to 179; these read IISI…VSLG, IAYI…AGML, TSFA…FSAF, LWII…GLGI, IFVT…LGML, and FLGV…GIFI.

Belongs to the MntP (TC 9.B.29) family.

It is found in the cell membrane. Functionally, probably functions as a manganese efflux pump. In Oceanobacillus iheyensis (strain DSM 14371 / CIP 107618 / JCM 11309 / KCTC 3954 / HTE831), this protein is Putative manganese efflux pump MntP.